The following is a 280-amino-acid chain: uncharacterized protein (280 aa).

Tyrosine 54 (proton donor) is an active-site residue. Histidine 116 lines the substrate pocket. 194–246 (SPLMQGQLLDHPVLADIAQTYNKSVAQIILRWDLQHGIITIPKSTKEHRIKEN) contacts NADP(+).

The protein belongs to the aldo/keto reductase family.

This is an uncharacterized protein from Bacillus subtilis (strain 168).